A 78-amino-acid chain; its full sequence is U5-ctenitoxin-Pk1a (78 aa).

7 disulfide bridges follow: cysteine 6/cysteine 23, cysteine 13/cysteine 29, cysteine 20/cysteine 52, cysteine 22/cysteine 40, cysteine 31/cysteine 38, cysteine 58/cysteine 73, and cysteine 69/cysteine 77.

In terms of tissue distribution, expressed by the venom gland.

It localises to the secreted. Lethal neurotoxin. Causes spastic paralysis and death in mice in 4-6 minutes after intracerebroventricular injection at dose levels of 1.5 ug per mouse. In Phoneutria keyserlingi (Brazilian wandering spider), this protein is U5-ctenitoxin-Pk1a.